Consider the following 547-residue polypeptide: G protein-coupled receptor associated sorting protein 3 (547 aa).

Basic residues predominate over residues 1–10; that stretch reads MAGTKNKTRA. Disordered regions lie at residues 1–32 and 80–102; these read MAGTKNKTRAQAKTEKKAAIQAKAGAEREATG and TLGKAMGDFTPKAGNESTSSTCK.

This sequence belongs to the GPRASP family. As to quaternary structure, homodimer. Highly expressed in brain. Not expressed in lung or liver. Down-regulated in brain from patients suffering from Alzheimer disease.

It is found in the cytoplasm. It localises to the nucleus. Survival and differentiation promoting protein that plays a role in the regulation of neurosynaptogenesis. Induces phosphatase PP2A activity which results in APP dephosphorylation and inhibits BACE1-mediated processing of APP. The protein is G protein-coupled receptor associated sorting protein 3 of Homo sapiens (Human).